The following is a 166-amino-acid chain: Thiol peroxidase (166 aa).

The 147-residue stretch at 18-164 folds into the Thioredoxin domain; that stretch reads VKVGDKAPNF…YEKAIEAAKA (147 aa). The active-site Cysteine sulfenic acid (-SOH) intermediate is the Cys60. An intrachain disulfide couples Cys60 to Cys94.

This sequence belongs to the peroxiredoxin family. Tpx subfamily. In terms of assembly, homodimer.

It carries out the reaction a hydroperoxide + [thioredoxin]-dithiol = an alcohol + [thioredoxin]-disulfide + H2O. In terms of biological role, thiol-specific peroxidase that catalyzes the reduction of hydrogen peroxide and organic hydroperoxides to water and alcohols, respectively. Plays a role in cell protection against oxidative stress by detoxifying peroxides. This Halalkalibacterium halodurans (strain ATCC BAA-125 / DSM 18197 / FERM 7344 / JCM 9153 / C-125) (Bacillus halodurans) protein is Thiol peroxidase.